The sequence spans 459 residues: Ribulose bisphosphate carboxylase large chain (459 aa).

Lys4 is subject to N6,N6,N6-trimethyllysine. The substrate site is built by Asn113 and Thr163. The active-site Proton acceptor is Lys165. Lys167 is a substrate binding site. Lys191, Asp193, and Glu194 together coordinate Mg(2+). Position 191 is an N6-carboxylysine (Lys191). His284 (proton acceptor) is an active-site residue. Substrate-binding residues include Arg285, His317, and Ser369.

It belongs to the RuBisCO large chain family. Type I subfamily. As to quaternary structure, heterohexadecamer of 8 large chains and 8 small chains; disulfide-linked. The disulfide link is formed within the large subunit homodimers. The cofactor is Mg(2+). Post-translationally, the disulfide bond which can form in the large chain dimeric partners within the hexadecamer appears to be associated with oxidative stress and protein turnover.

It is found in the plastid. The protein resides in the chloroplast. The catalysed reaction is 2 (2R)-3-phosphoglycerate + 2 H(+) = D-ribulose 1,5-bisphosphate + CO2 + H2O. It catalyses the reaction D-ribulose 1,5-bisphosphate + O2 = 2-phosphoglycolate + (2R)-3-phosphoglycerate + 2 H(+). In terms of biological role, ruBisCO catalyzes two reactions: the carboxylation of D-ribulose 1,5-bisphosphate, the primary event in carbon dioxide fixation, as well as the oxidative fragmentation of the pentose substrate in the photorespiration process. Both reactions occur simultaneously and in competition at the same active site. This chain is Ribulose bisphosphate carboxylase large chain, found in Parnassia fimbriata (Fringed grass-of-Parnassus).